The following is a 107-amino-acid chain: Acetyl-CoA acetyltransferase (107 aa).

The Acyl-thioester intermediate role is filled by cysteine 88.

It belongs to the thiolase-like superfamily. Thiolase family. As to quaternary structure, homotetramer.

It localises to the cytoplasm. The catalysed reaction is 2 acetyl-CoA = acetoacetyl-CoA + CoA. Functionally, catalyzes the condensation of two molecules of acetyl-CoA to produce acetoacetyl-CoA. The protein is Acetyl-CoA acetyltransferase (thi) of Clostridioides difficile (Peptoclostridium difficile).